A 274-amino-acid chain; its full sequence is Lectin-like protein (274 aa).

Positions 1 to 19 are cleaved as a signal peptide; the sequence is MKIHKLCFLALLLAHTTSA. Residues 28-268 are legume-lectin like; the sequence is TSELVFLGDA…RHDIWSWTFQ (241 aa). Residues 62–81 form a disordered region; that stretch reads SHGQSLWSTPVPFKPSSNSS. N-linked (GlcNAc...) asparagine glycosylation is present at Asn-129. The residue at position 238 (Ser-238) is a Phosphoserine.

It belongs to the leguminous lectin family. As to expression, expressed in seedlings and leaves of adult plants.

It is found in the secreted. The protein localises to the extracellular space. The protein resides in the apoplast. It localises to the cell membrane. In terms of biological role, plays a positive role in the effector-triggered immunity (ETI) response. Involved in salicylic acid (SA)-mediated processes occurring in ETI response, but is not involved in the autophagy process. Promotes systemic rather than local immunity. Essential for systemic acquired resistance (SAR), but not necessary for immune signaling downstream of SA. May act in parallel with SA. The sequence is that of Lectin-like protein from Arabidopsis thaliana (Mouse-ear cress).